Consider the following 229-residue polypeptide: Coiled-coil domain-containing protein 134 (229 aa).

An N-terminal signal peptide occupies residues 1 to 22; it reads MDPVQLLSFLLALLLPLGTALD. Residues 192–218 are a coiled coil; sequence NTDAFQKALREEEKRRRKEEKRKEIRK. Residues 201 to 229 form a disordered region; the sequence is REEEKRRRKEEKRKEIRKGPRITRSRSEL. Residues 219 to 229 are compositionally biased toward basic residues; the sequence is GPRITRSRSEL. Positions 226–229 match the Prevents secretion from ER motif; that stretch reads RSEL.

The protein belongs to the CCDC134 family.

The protein localises to the endoplasmic reticulum lumen. Molecular adapter required to prevent protein hyperglycosylation of HSP90B1: during translation, associates with nascent HSP90B1 and the STT3A catalytic component of the OST-A complex and tethers them to a specialized translocon that forms a microenvironment for HSP90B1 folding. In the CCDC134-containing translocon, STT3A associates with the SRT pseudosubstrate motif of HSP90B1, preventing access to facultative glycosylation sites until folding is completed, preventing hyperglycosylation and subsequent degradation of HSP90B1. The polypeptide is Coiled-coil domain-containing protein 134 (ccdc134) (Xenopus tropicalis (Western clawed frog)).